A 480-amino-acid polypeptide reads, in one-letter code: NADH-quinone oxidoreductase subunit N (480 aa).

The next 13 membrane-spanning stretches (helical) occupy residues 5-25 (NFLC…LFLY), 40-60 (IAIV…FTMY), 69-89 (ISSQ…FLVF), 110-130 (VIML…NFVM), 162-182 (YILT…FLYG), 204-224 (LGFV…PFHL), 237-257 (VTAY…IFVL), 266-286 (LIWN…GNLF), 296-316 (FFAF…IAGT), 324-344 (IFYT…IASV), 368-388 (AFVM…AGFF), 404-424 (ILVF…LLIV), and 450-470 (MVIC…YEYI).

Belongs to the complex I subunit 2 family. In terms of assembly, NDH-1 is composed of 14 different subunits. Subunits NuoA, H, J, K, L, M, N constitute the membrane sector of the complex.

Its subcellular location is the cell inner membrane. It carries out the reaction a quinone + NADH + 5 H(+)(in) = a quinol + NAD(+) + 4 H(+)(out). In terms of biological role, NDH-1 shuttles electrons from NADH, via FMN and iron-sulfur (Fe-S) centers, to quinones in the respiratory chain. The immediate electron acceptor for the enzyme in this species is believed to be a menaquinone. Couples the redox reaction to proton translocation (for every two electrons transferred, four hydrogen ions are translocated across the cytoplasmic membrane), and thus conserves the redox energy in a proton gradient. In Azobacteroides pseudotrichonymphae genomovar. CFP2, this protein is NADH-quinone oxidoreductase subunit N.